A 551-amino-acid chain; its full sequence is Solute carrier family 22 member 6 (551 aa).

Residues 1-23 (MAFNDLLKQVGGVGRFQRIQVTL) lie on the Cytoplasmic side of the membrane. A helical membrane pass occupies residues 24–44 (VVLPLLLMASHNTLQNFTAAI). Residues 45–135 (PPHHCRPPAH…LVCSHRALRQ (91 aa)) lie on the Extracellular side of the membrane. Asn56, Asn92, and Asn113 each carry an N-linked (GlcNAc...) asparagine glycan. Residues 136–156 (LGQSLYMAGVLIGAMVFGYLA) form a helical membrane-spanning segment. The Cytoplasmic portion of the chain corresponds to 157 to 164 (DRLGRRKV). The chain crosses the membrane as a helical span at residues 165–187 (LILNYLQTAVSGTCAAFSPNFTV). Over 188–195 (YCTFRLLS) the chain is Extracellular. Residues 196–216 (GMSLAGIALNCMTLNVEWMPI) form a helical membrane-spanning segment. Over 217-224 (HTRAYVGT) the chain is Cytoplasmic. A helical membrane pass occupies residues 225 to 245 (LAGYVYSTGQFLLAGVAYAVP). The Extracellular portion of the chain corresponds to 246-248 (HWR). Residues 249–269 (YLQLLVSVPFFAFFVYSWFFI) form a helical membrane-spanning segment. Topologically, residues 270–337 (ESARWYSTPG…ELLRCPALRH (68 aa)) are cytoplasmic. The helical transmembrane segment at 338–358 (LFLCLSLLWFATSFAYYGLVM) threads the bilayer. At 359 to 368 (DLQGFGVSIY) the chain is on the extracellular side. The chain crosses the membrane as a helical span at residues 369–389 (LIQVIFGAVDLPAKLVCFLVI). The Cytoplasmic portion of the chain corresponds to 390-395 (NSLGRR). The chain crosses the membrane as a helical span at residues 396 to 416 (PAQMASLLLAGICILVNGVIP). Topologically, residues 417–425 (RDQSIVRTS) are extracellular. Residues 426 to 446 (LAVLGKGCLASSFNCIFLYTG) form a helical membrane-spanning segment. Topologically, residues 447 to 484 (ELYPTMIRQTGLGMGSTMARVGSIVSPLVSMTSELYPS) are cytoplasmic. Residues 485–505 (LPLFIYGAVPVAASAATALLP) form a helical membrane-spanning segment. Topologically, residues 506-551 (ETLGQPLPDTVQDLESRRRGKPRRQQQEQQKQMVPLQASVQEKNGL) are extracellular. The segment at 520–551 (ESRRRGKPRRQQQEQQKQMVPLQASVQEKNGL) is disordered.

It belongs to the major facilitator (TC 2.A.1) superfamily. Organic cation transporter (TC 2.A.1.19) family. Post-translationally, glycosylated. Glycosylation is necessary for proper targeting of the transporter to the plasma membrane.

It is found in the basolateral cell membrane. The protein resides in the basal cell membrane. The enzyme catalyses (6R)-L-erythro-5,6,7,8-tetrahydrobiopterin(out) + a dicarboxylate(in) = (6R)-L-erythro-5,6,7,8-tetrahydrobiopterin(in) + a dicarboxylate(out). It catalyses the reaction L-erythro-7,8-dihydrobiopterin(out) + a dicarboxylate(in) = L-erythro-7,8-dihydrobiopterin(in) + a dicarboxylate(out). It carries out the reaction L-sepiapterin(out) + a dicarboxylate(in) = L-sepiapterin(in) + a dicarboxylate(out). The catalysed reaction is prostaglandin F2alpha(out) + a dicarboxylate(in) = prostaglandin F2alpha(in) + a dicarboxylate(out). The enzyme catalyses prostaglandin E2(out) + a dicarboxylate(in) = prostaglandin E2(in) + a dicarboxylate(out). It catalyses the reaction 3',5'-cyclic AMP(out) + a dicarboxylate(in) = 3',5'-cyclic AMP(in) + a dicarboxylate(out). It carries out the reaction 3',5'-cyclic GMP(out) + a dicarboxylate(in) = 3',5'-cyclic GMP(in) + a dicarboxylate(out). The catalysed reaction is urate(out) + a dicarboxylate(in) = urate(in) + a dicarboxylate(out). The enzyme catalyses kynurenate(out) + glutarate(in) = kynurenate(in) + glutarate(out). It catalyses the reaction (indol-3-yl)acetate(out) + a dicarboxylate(in) = (indol-3-yl)acetate(in) + a dicarboxylate(out). It carries out the reaction indoxyl sulfate(out) + a dicarboxylate(in) = indoxyl sulfate(in) + a dicarboxylate(out). The catalysed reaction is N-benzoylglycine(out) + a dicarboxylate(in) = N-benzoylglycine(in) + a dicarboxylate(out). The enzyme catalyses 3-carboxy-4-methyl-5-propyl-2-furanpropanoate(out) + a dicarboxylate(in) = 3-carboxy-4-methyl-5-propyl-2-furanpropanoate(in) + a dicarboxylate(out). Functionally, secondary active transporter that functions as a Na(+)-independent organic anion (OA)/dicarboxylate antiporter where the uptake of one molecule of OA into the cell is coupled with an efflux of one molecule of intracellular dicarboxylate such as 2-oxoglutarate or glutarate. Mediates the uptake of OA across the basolateral side of proximal tubule epithelial cells, thereby contributing to the renal elimination of endogenous OA from the systemic circulation into the urine. Functions as a biopterin transporters involved in the uptake and the secretion of coenzymes tetrahydrobiopterin (BH4), dihydrobiopterin (BH2) and sepiapterin to urine, thereby determining baseline levels of blood biopterins. Transports prostaglandin E2 (PGE2) and prostaglandin F2-alpha (PGF2-alpha) and may contribute to their renal excretion. Also mediates the uptake of cyclic nucleotides such as cAMP and cGMP. Involved in the transport of neuroactive tryptophan metabolites kynurenate (KYNA) and xanthurenate (XA) and may contribute to their secretion from the brain. May transport glutamate. Also involved in the disposition of uremic toxins and potentially toxic xenobiotics by the renal organic anion secretory pathway, helping reduce their undesired toxicological effects on the body. Uremic toxins include the indoxyl sulfate (IS), hippurate/N-benzoylglycine (HA), indole acetate (IA), 3-carboxy-4- methyl-5-propyl-2-furanpropionate (CMPF) and urate. Xenobiotics include the mycotoxin ochratoxin (OTA). May also contribute to the transport of organic compounds in testes across the blood-testis-barrier. May also work as a bidirectional OA/dicarboxylate exchanger. The polypeptide is Solute carrier family 22 member 6 (Oryctolagus cuniculus (Rabbit)).